Here is a 640-residue protein sequence, read N- to C-terminus: Threonine--tRNA ligase (640 aa).

In terms of domain architecture, TGS spans 1 to 61; the sequence is MPVITLPDGS…SNDATLQIIT (61 aa). Residues 242–533 form a catalytic region; the sequence is DHRKIGKQLD…LIEHYAGVFP (292 aa). Positions 333, 384, and 510 each coordinate Zn(2+).

It belongs to the class-II aminoacyl-tRNA synthetase family. In terms of assembly, homodimer. Zn(2+) serves as cofactor.

The protein localises to the cytoplasm. The catalysed reaction is tRNA(Thr) + L-threonine + ATP = L-threonyl-tRNA(Thr) + AMP + diphosphate + H(+). In terms of biological role, catalyzes the attachment of threonine to tRNA(Thr) in a two-step reaction: L-threonine is first activated by ATP to form Thr-AMP and then transferred to the acceptor end of tRNA(Thr). Also edits incorrectly charged L-seryl-tRNA(Thr). This Pseudomonas putida (strain GB-1) protein is Threonine--tRNA ligase.